Consider the following 137-residue polypeptide: Large ribosomal subunit protein uL16 (137 aa).

Belongs to the universal ribosomal protein uL16 family. Part of the 50S ribosomal subunit.

Functionally, binds 23S rRNA and is also seen to make contacts with the A and possibly P site tRNAs. This chain is Large ribosomal subunit protein uL16, found in Bradyrhizobium sp. (strain BTAi1 / ATCC BAA-1182).